Reading from the N-terminus, the 156-residue chain is Cell division protein SepF (156 aa).

Residues 20–36 (AQYGYEKEQTDMKKQQD) show a composition bias toward basic and acidic residues. The segment at 20 to 50 (AQYGYEKEQTDMKKQQDPPEQQDVTFPKAQP) is disordered.

Belongs to the SepF family. As to quaternary structure, homodimer. Interacts with FtsZ.

The protein resides in the cytoplasm. Its function is as follows. Cell division protein that is part of the divisome complex and is recruited early to the Z-ring. Probably stimulates Z-ring formation, perhaps through the cross-linking of FtsZ protofilaments. Its function overlaps with FtsA. The polypeptide is Cell division protein SepF (Bacillus cereus (strain G9842)).